The primary structure comprises 131 residues: Structural protein ORF131 (131 aa).

Belongs to the viral ORF131/RIP family.

It is found in the virion. This is Structural protein ORF131 from Acidianus convivator (ATV).